We begin with the raw amino-acid sequence, 311 residues long: Syndecan-1 (311 aa).

The first 22 residues, 1–22, serve as a signal peptide directing secretion; it reads MRRAALWLWLCALALRLQPALL. Residues 23 to 255 lie on the Extracellular side of the membrane; that stretch reads HSVAVNMPPE…GLLDRKEVLG (233 aa). Disordered stretches follow at residues 31 to 85 and 141 to 244; these read PEDQ…PDAI and TMAP…TGAS. Residues 32–42 are compositionally biased toward acidic residues; sequence EDQDGSGDDSD. O-linked (Xyl...) (chondroitin sulfate) serine glycosylation is present at Ser-37. A glycan (N-linked (GlcNAc...) asparagine) is linked at Asn-43. 2 O-linked (Xyl...) (heparan sulfate) serine glycosylation sites follow: Ser-45 and Ser-47. A compositionally biased stretch (low complexity) spans 71–84; it reads TTTATAPEPTSPDA. Composition is skewed to basic and acidic residues over residues 151 to 162 and 169 to 180; these read PHRDVQPDHHET and GRMEPHRPHVEE. 2 O-linked (Xyl...) (chondroitin sulfate) serine glycosylation sites follow: Ser-204 and Ser-214. Positions 215 to 226 are enriched in low complexity; it reads GENAAGAAGEPG. A helical membrane pass occupies residues 256–276; it reads GVIAGGLVGLIFAVCLVGFML. The Cytoplasmic portion of the chain corresponds to 277 to 311; sequence YRMKKKDEGSYSLEEPKQANGGAYQKPTKQEEFYA. Positions 285–311 are disordered; sequence GSYSLEEPKQANGGAYQKPTKQEEFYA. Ser-286 is subject to Phosphoserine.

The protein belongs to the syndecan proteoglycan family. As to quaternary structure, interacts with CDCP1. Interacts (via C-terminus) with TIAM1 (via PDZ domain). Interacts with MDK. Post-translationally, shedding is enhanced by a number of factors such as heparanase, thrombin or EGF. Also by stress and wound healing. PMA-mediated shedding is inhibited by TIMP3.

The protein localises to the membrane. It is found in the secreted. The protein resides in the extracellular exosome. Its function is as follows. Cell surface proteoglycan that contains both heparan sulfate and chondroitin sulfate and that links the cytoskeleton to the interstitial matrix. Regulates exosome biogenesis in concert with SDCBP and PDCD6IP. Able to induce its own expression in dental mesenchymal cells and also in the neighboring dental epithelial cells via an MSX1-mediated pathway. The polypeptide is Syndecan-1 (Bos taurus (Bovine)).